The following is a 255-amino-acid chain: 3-oxoacyl-[acyl-carrier-protein] reductase MabA (255 aa).

NADP(+) contacts are provided by residues 32 to 35, Arg55, 69 to 70, Gly98, Tyr161, Lys165, Ile194, and Arg205; these read NRGI and DV. Tyr161 serves as the catalytic Proton acceptor.

It belongs to the short-chain dehydrogenases/reductases (SDR) family. Homotetramer.

It is found in the secreted. The protein resides in the cell wall. The enzyme catalyses a (3R)-hydroxyacyl-[ACP] + NADP(+) = a 3-oxoacyl-[ACP] + NADPH + H(+). It catalyses the reaction a (3R)-3-hydroxyacyl-CoA + NADP(+) = a 3-oxoacyl-CoA + NADPH + H(+). It carries out the reaction (3R)-3-hydroxybutanoyl-CoA + NADP(+) = acetoacetyl-CoA + NADPH + H(+). The catalysed reaction is (3R)-hydroxyoctanoyl-CoA + NADP(+) = 3-oxooctanoyl-CoA + NADPH + H(+). It participates in lipid metabolism; mycolic acid biosynthesis. Its function is as follows. Part of the mycobacterial fatty acid elongation system FAS-II, which is involved in mycolic acid biosynthesis. Catalyzes the NADPH-dependent reduction of beta-ketoacyl derivatives, the second step of the FAS-II elongation cycle. Has a preference for longer substrates. Can use CoA derivatives as substrates in vitro. In Mycolicibacterium smegmatis (strain ATCC 700084 / mc(2)155) (Mycobacterium smegmatis), this protein is 3-oxoacyl-[acyl-carrier-protein] reductase MabA.